Consider the following 72-residue polypeptide: Conotoxin TxMMSK-04 (72 aa).

The N-terminal stretch at 1-20 is a signal peptide; sequence MMSKLGVLLTICLLLFPLTA. Residues 21-51 constitute a propeptide that is removed on maturation; that stretch reads VPLDGDQPADRPAERMQDGISSEHHPFFDSV. Position 55 is a pyrrolidone carboxylic acid (Q55). Cystine bridges form between C57–C71, C58–C67, and C63–C70. P69 carries the 4-hydroxyproline modification. C71 bears the Cysteine amide mark.

Belongs to the conotoxin M superfamily. As to expression, expressed by the venom duct.

It is found in the secreted. The polypeptide is Conotoxin TxMMSK-04 (Conus textile (Cloth-of-gold cone)).